Reading from the N-terminus, the 337-residue chain is Tryptophan--tRNA ligase (337 aa).

ATP is bound by residues 9–11 and 17–18; these read RPT and GH. The 'HIGH' region signature appears at 10–18; it reads PTGRLHLGH. Residue D137 participates in L-tryptophan binding. Residues 149–151, L187, and 195–199 each bind ATP; these read GKD and KMSKS. Residues 195-199 carry the 'KMSKS' region motif; sequence KMSKS.

It belongs to the class-I aminoacyl-tRNA synthetase family. As to quaternary structure, homodimer.

It is found in the cytoplasm. The catalysed reaction is tRNA(Trp) + L-tryptophan + ATP = L-tryptophyl-tRNA(Trp) + AMP + diphosphate + H(+). Catalyzes the attachment of tryptophan to tRNA(Trp). The protein is Tryptophan--tRNA ligase of Treponema pallidum (strain Nichols).